A 160-amino-acid polypeptide reads, in one-letter code: Cytochrome b6-f complex subunit 4 (160 aa).

The next 3 helical transmembrane spans lie at 36-56 (LLYVFPIVIMGSFACIVALAV), 95-115 (LLGVLAMASVPLGLILVPFIE), and 131-151 (TVFLFGTLVTLWLGIGAALPL).

It belongs to the cytochrome b family. PetD subfamily. The 4 large subunits of the cytochrome b6-f complex are cytochrome b6, subunit IV (17 kDa polypeptide, PetD), cytochrome f and the Rieske protein, while the 4 small subunits are PetG, PetL, PetM and PetN. The complex functions as a dimer.

It is found in the cellular thylakoid membrane. Its function is as follows. Component of the cytochrome b6-f complex, which mediates electron transfer between photosystem II (PSII) and photosystem I (PSI), cyclic electron flow around PSI, and state transitions. This chain is Cytochrome b6-f complex subunit 4, found in Trichormus variabilis (strain ATCC 29413 / PCC 7937) (Anabaena variabilis).